The chain runs to 623 residues: DNA-directed RNA polymerase subunit beta' (623 aa).

The Zn(2+) site is built by cysteine 70, cysteine 72, cysteine 85, and cysteine 88. Mg(2+) contacts are provided by aspartate 466, aspartate 468, and aspartate 470.

The protein belongs to the RNA polymerase beta' chain family. RpoC1 subfamily. In terms of assembly, in plastids the minimal PEP RNA polymerase catalytic core is composed of four subunits: alpha, beta, beta', and beta''. When a (nuclear-encoded) sigma factor is associated with the core the holoenzyme is formed, which can initiate transcription. It depends on Mg(2+) as a cofactor. The cofactor is Zn(2+).

The protein resides in the plastid. The protein localises to the chloroplast. The catalysed reaction is RNA(n) + a ribonucleoside 5'-triphosphate = RNA(n+1) + diphosphate. DNA-dependent RNA polymerase catalyzes the transcription of DNA into RNA using the four ribonucleoside triphosphates as substrates. This chain is DNA-directed RNA polymerase subunit beta', found in Rhodomonas salina (Cryptomonas salina).